Reading from the N-terminus, the 255-residue chain is Aliphatic sulfonates import ATP-binding protein SsuB (255 aa).

The ABC transporter domain maps to 12 to 233 (LLLNAVSKHY…RLGSVRLAEL (222 aa)). Position 44–51 (44–51 (GRSGGGKS)) interacts with ATP.

It belongs to the ABC transporter superfamily. Aliphatic sulfonates importer (TC 3.A.1.17.2) family. As to quaternary structure, the complex is composed of two ATP-binding proteins (SsuB), two transmembrane proteins (SsuC) and a solute-binding protein (SsuA).

The protein resides in the cell inner membrane. It carries out the reaction ATP + H2O + aliphatic sulfonate-[sulfonate-binding protein]Side 1 = ADP + phosphate + aliphatic sulfonateSide 2 + [sulfonate-binding protein]Side 1.. Functionally, part of the ABC transporter complex SsuABC involved in aliphatic sulfonates import. Responsible for energy coupling to the transport system. The protein is Aliphatic sulfonates import ATP-binding protein SsuB of Shigella sonnei (strain Ss046).